Reading from the N-terminus, the 1070-residue chain is Potassium/chloride cotransporter 3 (1070 aa).

The next 15 membrane-spanning stretches (helical) occupy residues 92–112, 114–134, 142–162, 174–194, 196–216, 228–248, 251–271, 400–420, 433–453, 473–493, 534–554, 557–577, 600–620, 791–811, and 827–847; these read GVMLGVYLPTIQHILGVTMFI, LFWVVGMSGVAWTMALLAICC, ISLSAVATNGVVESGGAYFII, VGILFYLANTVAASMYIVGGV, VILMYLWPEMAIGGADALHDT, LYGTVFLLIQALIVAMGVKFV, LAPVSLMCVILAIAACIGGGI, FFMLMAIYFPAVTGIFTGTNM, VGTIAATLTTSAIYYILAILF, TMVVAALSWPHPAVVTVGAFL, PFLGLVLTVIIAECGILLGAV, IAEVLDFFFLMCYAFVNLIAV, LLGAALCFFIMFASSVPLACI, LVLFAEEIIHGAANDNCLIVT, and FIDIWWIVQDGGILMLIAYLL.

In terms of tissue distribution, expressed in the amphid sheath glia and the cephalic sheath glia. Also expressed in the inner labial and outer labial sheath and socket glia and as well as phasmid sheath glia.

It is found in the cell membrane. Functionally, probable potassium/chloride cotransporter that functions in the amphid sheath glial cells to regulate thermotaxis behavior. By maintaining chloride homeostasis, negatively regulates guanylate cyclase gcy-8 in the thermosensory AFD neurons and thereby controls the microvilli receptive ending morphology of the AFD neurons and thermotaxis. Modulates the temperature-evoked neuronal activity of the AFD neurons such as calcium responses to temperature gradients. Might also play a role in the chemotaxis behavior mediated by the sensory neurons AWA and AWC. The protein is Potassium/chloride cotransporter 3 (kcc-3) of Caenorhabditis elegans.